The sequence spans 234 residues: Enolase-phosphatase E1 (234 aa).

Residues D10 and E12 each contribute to the Mg(2+) site. Substrate is bound by residues 125-126 and K162; that span reads SS. Mg(2+) is bound at residue D188.

Belongs to the HAD-like hydrolase superfamily. MasA/MtnC family. In terms of assembly, monomer. Mg(2+) serves as cofactor.

The protein resides in the cytoplasm. The protein localises to the nucleus. The enzyme catalyses 5-methylsulfanyl-2,3-dioxopentyl phosphate + H2O = 1,2-dihydroxy-5-(methylsulfanyl)pent-1-en-3-one + phosphate. Its pathway is amino-acid biosynthesis; L-methionine biosynthesis via salvage pathway; L-methionine from S-methyl-5-thio-alpha-D-ribose 1-phosphate: step 3/6. The protein operates within amino-acid biosynthesis; L-methionine biosynthesis via salvage pathway; L-methionine from S-methyl-5-thio-alpha-D-ribose 1-phosphate: step 4/6. Functionally, bifunctional enzyme that catalyzes the enolization of 2,3-diketo-5-methylthiopentyl-1-phosphate (DK-MTP-1-P) into the intermediate 2-hydroxy-3-keto-5-methylthiopentenyl-1-phosphate (HK-MTPenyl-1-P), which is then dephosphorylated to form the acireductone 1,2-dihydroxy-3-keto-5-methylthiopentene (DHK-MTPene). This Neurospora crassa (strain ATCC 24698 / 74-OR23-1A / CBS 708.71 / DSM 1257 / FGSC 987) protein is Enolase-phosphatase E1 (utr4).